A 571-amino-acid polypeptide reads, in one-letter code: Proline-rich protein 35 (571 aa).

Disordered stretches follow at residues 1–27 (MSREAGSCRVGTGARARSRKPKKPHYI), 79–187 (GSTT…EGSV), 286–402 (APVS…GSPE), and 476–571 (GPQA…GAEV). Over residues 16-26 (ARSRKPKKPHY) the composition is skewed to basic residues. Positions 165–175 (GMGGDPRGVGA) are enriched in gly residues. The segment covering 316–336 (TPRDPGQEGELERAAQSDPRR) has biased composition (basic and acidic residues). Residues 351–367 (PSLTRFCSRSSLPTGSS) show a composition bias toward polar residues. Residues 380-399 (PETPGPEGPLPLQPRGPVPG) show a composition bias toward pro residues.

The protein is Proline-rich protein 35 (PRR35) of Homo sapiens (Human).